The chain runs to 323 residues: MAVNMTMGRDTKWLTLEVCREFQRGTCSRSDAECKFAHPSRSCHVENGRVIACFDSLKGRCTRENCKYLHPPPHLKTQLEINGRNNLIQQKAAAAMLAQQMQFMLPGAQLQPITTFPMTHSLATSPSMAFSPYLNHMGPGMGLMPELLPSTPLLVPGSPTGLAAMSNGTSSPKHMRTDKLEVCREFQRGNCTRGESDCRYAHPLEAGMVDSSENSVIVCMDYIKGRCSRDKCKYFHPPAHLQARIKASQHQASQNTASAALSPPAGTMQLLPKRPVLEKSNGAVAGIFNPSMFHYQQALANMQLQQPAFIPTGEWCSGVVTLC.

4 C3H1-type zinc fingers span residues 13-41, 47-73, 177-205, and 213-239; these read WLTL…HPSR, NGRV…HPPP, TDKL…HPLE, and ENSV…HPPA.

This sequence belongs to the muscleblind family. In terms of tissue distribution, expressed in fast and slow myotomal muscle, heart, liver, skin, brain and testis.

The protein localises to the nucleus. The protein resides in the cytoplasm. Involved in pre-mRNA alternative splicing regulation. Could inhibit terminal muscle differentiation, acting at approximately the time of myogenin induction. This chain is Muscleblind-like protein 3 (mbnl3), found in Takifugu rubripes (Japanese pufferfish).